Here is a 299-residue protein sequence, read N- to C-terminus: Prohibitin-2 (299 aa).

Ala-2 bears the N-acetylalanine mark. Positions 19–49 (MGTALKLLLGAGAVAYGVRESVFTVEGGHRA) are necessary for transcriptional repression. At Tyr-128 the chain carries Phosphotyrosine. Lys-147 bears the N6-acetyllysine mark. Residues 150–174 (ASQLITQRAQVSLLIRRELTERAKD) are necessary for transcriptional repression. The residue at position 151 (Ser-151) is a Phosphoserine. Residues 190–238 (SREYTAAVEAKQVAQQEAQRAQFLVEKAKQEQRQKIVQAEGEAEAAKML) are a coiled coil. N6-acetyllysine is present on residues Lys-200, Lys-236, Lys-250, and Lys-262.

The protein belongs to the prohibitin family. The mitochondrial prohibitin complex consists of two subunits (PHB1 and PHB2), assembled into a membrane-associated ring-shaped supercomplex of approximately 1 mDa. Interacts with ESR1, HDAC1 and HDAC5. Interacts with ZNF703. Interacts with STOML2. Interacts with ARFGEF3. Interacts with SPHK2. Interacts with COX4I1; the interaction associates PHB2 with COX. Interacts with MAP1LC3B (membrane-bound form LC3-II); the interaction is direct and upon mitochondrial depolarization and proteasome-dependent outer membrane rupture. Interacts with IGFBP6 (via C-terminal domain). Interacts with CLPB. Interacts with CD86 (via cytoplasmic domain); the interactions increases after priming with CD40. Interacts with AFG3L2. Interacts with DNAJC19. Interacts with AKT2; this interaction may be important for myogenic differentiation. In terms of processing, phosphorylated. Tyrosine phosphorylation is indirectly stimulated by IGFBP6.

Its subcellular location is the mitochondrion inner membrane. It is found in the cytoplasm. The protein localises to the nucleus. The protein resides in the cell membrane. Protein with pleiotropic attributes mediated in a cell-compartment- and tissue-specific manner, which include the plasma membrane-associated cell signaling functions, mitochondrial chaperone, and transcriptional co-regulator of transcription factors and sex steroid hormones in the nucleus. Its function is as follows. In the mitochondria, together with PHB, forms large ring complexes (prohibitin complexes) in the inner mitochondrial membrane (IMM) and functions as a chaperone protein that stabilizes mitochondrial respiratory enzymes and maintains mitochondrial integrity in the IMM, which is required for mitochondrial morphogenesis, neuronal survival, and normal lifespan. The prohibitin complex, with DNAJC19, regulates cardiolipin remodeling and the protein turnover of OMA1 in a cardiolipin-binding manner. Also regulates cytochrome-c oxidase assembly (COX) and mitochondrial respiration. Binding to sphingoid 1-phosphate (SPP) modulates its regulator activity. Has a key role of mitophagy receptor involved in targeting mitochondria for autophagic degradation. Involved in mitochondrial-mediated antiviral innate immunity, activates RIG-I-mediated signal transduction and production of IFNB1 and pro-inflammatory cytokine IL6. Functionally, in the nucleus, serves as transcriptional co-regulator. Acts as a mediator of transcriptional repression by nuclear hormone receptors via recruitment of histone deacetylases. Functions as an estrogen receptor (ER)-selective coregulator that potentiates the inhibitory activities of antiestrogens and represses the activity of estrogens. Competes with NCOA1 for modulation of ER transcriptional activity. In terms of biological role, in the plasma membrane, is involved in IGFBP6-induced cell migration. Cooperates with CD86 to mediate CD86-signaling in B lymphocytes that regulates the level of IgG1 produced through the activation of distal signaling intermediates. Upon CD40 engagement, required to activate NF-kappa-B signaling pathway via phospholipase C and protein kinase C activation. The polypeptide is Prohibitin-2 (Rattus norvegicus (Rat)).